The primary structure comprises 89 residues: Small ribosomal subunit protein uS15 (89 aa).

It belongs to the universal ribosomal protein uS15 family. Part of the 30S ribosomal subunit. Forms a bridge to the 50S subunit in the 70S ribosome, contacting the 23S rRNA.

One of the primary rRNA binding proteins, it binds directly to 16S rRNA where it helps nucleate assembly of the platform of the 30S subunit by binding and bridging several RNA helices of the 16S rRNA. Functionally, forms an intersubunit bridge (bridge B4) with the 23S rRNA of the 50S subunit in the ribosome. The polypeptide is Small ribosomal subunit protein uS15 (Aliivibrio salmonicida (strain LFI1238) (Vibrio salmonicida (strain LFI1238))).